The chain runs to 105 residues: Large ribosomal subunit protein bL21 (105 aa).

Belongs to the bacterial ribosomal protein bL21 family. As to quaternary structure, part of the 50S ribosomal subunit. Contacts protein L20.

Its function is as follows. This protein binds to 23S rRNA in the presence of protein L20. This chain is Large ribosomal subunit protein bL21, found in Parabacteroides distasonis (strain ATCC 8503 / DSM 20701 / CIP 104284 / JCM 5825 / NCTC 11152).